Consider the following 333-residue polypeptide: Cathepsin M (333 aa).

An N-terminal signal peptide occupies residues 1–15 (MTSAIFLAMLCLGMA). The propeptide at 16 to 113 (LPSPAPDPIL…KSVQKRLSVN (98 aa)) is activation peptide. 2 disulfide bridges follow: Cys-135/Cys-178 and Cys-169/Cys-211. Cys-138 is an active-site residue. Asn-217, Asn-221, and Asn-268 each carry an N-linked (GlcNAc...) asparagine glycan. A disulfide bridge connects residues Cys-269 and Cys-322. Residues His-276 and Asn-300 contribute to the active site.

Belongs to the peptidase C1 family. In terms of tissue distribution, placenta.

The protein resides in the lysosome. This is Cathepsin M (Ctsm) from Mus musculus (Mouse).